A 75-amino-acid chain; its full sequence is uncharacterized protein (75 aa).

Residues 1–14 (MNDNNDNNNNNKNI) show a composition bias toward low complexity. Residues 1-30 (MNDNNDNNNNNKNIDNVDDDNDDNDKGKYK) are disordered.

This is an uncharacterized protein from Dictyostelium discoideum (Social amoeba).